The chain runs to 200 residues: Kunitz type trypsin inhibitor 111 (200 aa).

The N-terminal stretch at 1–24 (MSTISFTIFILANVWLLVVTTSIA) is a signal peptide. 3 cysteine pairs are disulfide-bonded: C62-C108, C160-C172, and C165-C168.

This sequence belongs to the protease inhibitor I3 (leguminous Kunitz-type inhibitor) family. Interacts with SCP1.

It is found in the secreted. The protein localises to the extracellular space. The protein resides in the apoplast. This Medicago truncatula (Barrel medic) protein is Kunitz type trypsin inhibitor 111 (KPI111).